The following is a 1658-amino-acid chain: Protein TIC 214 (1658 aa).

6 helical membrane-spanning segments follow: residues 28–48, 52–72, 82–102, 130–150, 165–185, and 199–219; these read FGLY…ILTI, LLGG…GQLI, IYVM…YMLF, IFLD…SPVF, ISFV…FINL, and VNYP…ILAL.

Belongs to the TIC214 family. As to quaternary structure, part of the Tic complex.

It is found in the plastid. The protein localises to the chloroplast inner membrane. Its function is as follows. Involved in protein precursor import into chloroplasts. May be part of an intermediate translocation complex acting as a protein-conducting channel at the inner envelope. The chain is Protein TIC 214 from Huperzia lucidula (Shining clubmoss).